Here is a 130-residue protein sequence, read N- to C-terminus: Large ribosomal subunit protein eL34 (130 aa).

The tract at residues 111-130 (KPVSKPPKIQKTAKAASKSK) is disordered.

This sequence belongs to the eukaryotic ribosomal protein eL34 family.

This Aedes albopictus (Asian tiger mosquito) protein is Large ribosomal subunit protein eL34 (RpL34).